The sequence spans 377 residues: MWQQAIGDALGITARNLKKFGDRFPHVSDGSNKYVLNDNTDWTDGFWSGILWLCYEYTGDEQYREGAVRTVASFRERLDRFENLDHHDIGFLYSLSAKAQWIVEKDESARKLALDAADVLMRRWRADAGIIQAWGPKGDPENGGRIIIDCLLNLPLLLWAGEQTGDPEYRRVAEAHALKSRRFLVRGDDSSYHTFYFDPENGNAIRGGTHQGNTDGSTWTRGQAWGIYGFALNSRYLGNADLLETAKRMARHFLARVPEDGVVYWDFEVPQEPSSYRDSSASAITACGLLEIASQLDESDPERQRFIDAAKTTVTALRDGYAERDDGEAEGFIRRGSYHVRGGISPDDYTIWGDYYYLEALLRLERGVTGYWYERGR.

D88 acts as the Nucleophile in catalysis. D149 (proton donor) is an active-site residue.

Belongs to the glycosyl hydrolase 88 family. In terms of assembly, monomer.

It is found in the cytoplasm. It carries out the reaction beta-D-Delta(4)-GlcA-(1-&gt;4)-beta-D-Glc-(1-&gt;4)-alpha-L-Rha-(1-&gt;3)-D-Glc + H2O = beta-D-Glc-(1-&gt;4)-alpha-L-Rha-(1-&gt;3)-D-Glc + 5-dehydro-4-deoxy-D-glucuronate. Partially inhibited by divalent metal ions such as calcium, copper, iron and mercury. Its function is as follows. Catalyzes the hydrolysis of oligosaccharides with unsaturated glucuronyl residues at the non-reducing terminal, to a sugar or an amino sugar, and an unsaturated D-glucuronic acid (GlcA), which is nonenzymatically converted immediately to alpha-keto acid. This Bacillus sp. (strain GL1) protein is Unsaturated glucuronyl hydrolase (ugl).